Here is a 252-residue protein sequence, read N- to C-terminus: Indole-3-glycerol phosphate synthase (252 aa).

This sequence belongs to the TrpC family.

It catalyses the reaction 1-(2-carboxyphenylamino)-1-deoxy-D-ribulose 5-phosphate + H(+) = (1S,2R)-1-C-(indol-3-yl)glycerol 3-phosphate + CO2 + H2O. It functions in the pathway amino-acid biosynthesis; L-tryptophan biosynthesis; L-tryptophan from chorismate: step 4/5. This is Indole-3-glycerol phosphate synthase from Listeria monocytogenes serovar 1/2a (strain ATCC BAA-679 / EGD-e).